The following is a 24-amino-acid chain: Waglerin-4 (24 aa).

A disulfide bond links C11 and C15.

This sequence belongs to the waglerin family. As to quaternary structure, monomer. As to expression, expressed by the venom gland.

The protein resides in the secreted. Waglerin-2 selectively blocks the epsilon subunit of muscle nicotinic acetylcholine receptor (nAChR). Also has effects on rodent ionotropic GABA(A) receptors (GABR), since it potentiates I(GABA) in some neurons and depresses I(GABA) in others. In mice, it elicits tachypnea, ocular proptosis, rapid collapse and spasms, whereas no toxic effects on respiration and blood pressure are observed in rats. Its function is as follows. Waglerin-4 selectively blocks the epsilon subunit of muscle nicotinic acetylcholine receptor. It elicits tachypnea, ocular proptosis, rapid collapse and spasms in mice. It causes death by respiratory failure. This is Waglerin-4 from Tropidolaemus wagleri (Wagler's pit viper).